Consider the following 165-residue polypeptide: PTS system glucose-specific EIIA component (165 aa).

Residues 33-137 enclose the PTS EIIA type-1 domain; the sequence is DPVFAGRMMG…STITPIVITN (105 aa). Zn(2+) is bound by residues His-70 and His-85. His-85 serves as the catalytic Tele-phosphohistidine intermediate; for EIIA activity. His-85 is subject to Phosphohistidine; by HPr.

As to quaternary structure, heterodimer with glycerol kinase (glpk). The cofactor is Zn(2+).

It is found in the cytoplasm. Functionally, the phosphoenolpyruvate-dependent sugar phosphotransferase system (sugar PTS), a major carbohydrate active transport system, catalyzes the phosphorylation of incoming sugar substrates concomitantly with their translocation across the cell membrane. The enzyme II complex composed of PtsG and Crr is involved in glucose transport. The chain is PTS system glucose-specific EIIA component (crr) from Bacillus cereus (strain ATCC 14579 / DSM 31 / CCUG 7414 / JCM 2152 / NBRC 15305 / NCIMB 9373 / NCTC 2599 / NRRL B-3711).